The chain runs to 160 residues: 2-C-methyl-D-erythritol 2,4-cyclodiphosphate synthase (160 aa).

Residues D11 and H13 each coordinate a divalent metal cation. 4-CDP-2-C-methyl-D-erythritol 2-phosphate is bound by residues 11 to 13 and 37 to 38; these read DVH and HS. A divalent metal cation is bound at residue H45. 4-CDP-2-C-methyl-D-erythritol 2-phosphate-binding positions include 59 to 61 and R145; that span reads DIG.

The protein belongs to the IspF family. As to quaternary structure, homotrimer. The cofactor is a divalent metal cation.

It carries out the reaction 4-CDP-2-C-methyl-D-erythritol 2-phosphate = 2-C-methyl-D-erythritol 2,4-cyclic diphosphate + CMP. It functions in the pathway isoprenoid biosynthesis; isopentenyl diphosphate biosynthesis via DXP pathway; isopentenyl diphosphate from 1-deoxy-D-xylulose 5-phosphate: step 4/6. Functionally, involved in the biosynthesis of isopentenyl diphosphate (IPP) and dimethylallyl diphosphate (DMAPP), two major building blocks of isoprenoid compounds. Catalyzes the conversion of 4-diphosphocytidyl-2-C-methyl-D-erythritol 2-phosphate (CDP-ME2P) to 2-C-methyl-D-erythritol 2,4-cyclodiphosphate (ME-CPP) with a corresponding release of cytidine 5-monophosphate (CMP). The protein is 2-C-methyl-D-erythritol 2,4-cyclodiphosphate synthase of Neisseria meningitidis serogroup B (strain ATCC BAA-335 / MC58).